A 250-amino-acid chain; its full sequence is MTGSWEARYAAEFFGTLILVLLGNGAVANAFLKNTTGNDDPGLANGGWLLVASGYGLGVMLPAMMFGSISGNHLNPAITIGQAVIGIFPWAHVAPYLIWQFLGAIAGQCLILALYWPHYRQTTDNEAVLGTFATSDHANSQLNGFVTEMVGTAVLIFGAMGLYRGMFFHQNIDIANIGVGLLIAAMVISLGGPTGPALNPARDLGPRLVHALFPVPNKGSSHWEYSWVPVVAPIVGAVIGIWIYKIFFGL.

2 consecutive transmembrane segments (helical) span residues glutamate 12–leucine 32 and glycine 46–phenylalanine 66. Residues asparagine 75–alanine 77 carry the NPA 1 motif. 3 helical membrane-spanning segments follow: residues isoleucine 85–isoleucine 105, leucine 142–leucine 162, and isoleucine 172–glycine 192. An NPA 2 motif is present at residues asparagine 199–alanine 201. Residues valine 230 to leucine 250 form a helical membrane-spanning segment.

The protein belongs to the MIP/aquaporin (TC 1.A.8) family.

It is found in the cell membrane. Probable transporter that facilitates the transmembrane diffusion of an unknown substrate. Is not permeable to water, dihydroxyacetone, glycerol, urea, H(2)O(2) and D/L-lactic acid. The chain is Glycerol uptake facilitator protein-like 5 from Lactiplantibacillus plantarum (strain ATCC BAA-793 / NCIMB 8826 / WCFS1) (Lactobacillus plantarum).